A 729-amino-acid chain; its full sequence is Fatty acid oxidation complex subunit alpha (729 aa).

Residues 1–189 are enoyl-CoA hydratase/isomerase; sequence MLYKGDTLYL…KIGLVDGVVK (189 aa). Residue Asp-296 participates in substrate binding. Positions 311-729 are 3-hydroxyacyl-CoA dehydrogenase; it reads ETPKQAAVLG…ARPVGDLKTA (419 aa). NAD(+)-binding positions include Met-324, Asp-343, 400–402, Lys-407, and Ser-429; that span reads VVE. Residue His-450 is the For 3-hydroxyacyl-CoA dehydrogenase activity of the active site. Asn-453 provides a ligand contact to NAD(+). 2 residues coordinate substrate: Asn-500 and Tyr-660. Residues 708–729 are disordered; that stretch reads RHNEPYYPPVEPARPVGDLKTA.

The protein in the N-terminal section; belongs to the enoyl-CoA hydratase/isomerase family. In the C-terminal section; belongs to the 3-hydroxyacyl-CoA dehydrogenase family. As to quaternary structure, heterotetramer of two alpha chains (FadB) and two beta chains (FadA).

It carries out the reaction a (3S)-3-hydroxyacyl-CoA + NAD(+) = a 3-oxoacyl-CoA + NADH + H(+). The enzyme catalyses a (3S)-3-hydroxyacyl-CoA = a (2E)-enoyl-CoA + H2O. The catalysed reaction is a 4-saturated-(3S)-3-hydroxyacyl-CoA = a (3E)-enoyl-CoA + H2O. It catalyses the reaction (3S)-3-hydroxybutanoyl-CoA = (3R)-3-hydroxybutanoyl-CoA. It carries out the reaction a (3Z)-enoyl-CoA = a 4-saturated (2E)-enoyl-CoA. The enzyme catalyses a (3E)-enoyl-CoA = a 4-saturated (2E)-enoyl-CoA. It functions in the pathway lipid metabolism; fatty acid beta-oxidation. Functionally, involved in the aerobic and anaerobic degradation of long-chain fatty acids via beta-oxidation cycle. Catalyzes the formation of 3-oxoacyl-CoA from enoyl-CoA via L-3-hydroxyacyl-CoA. It can also use D-3-hydroxyacyl-CoA and cis-3-enoyl-CoA as substrate. In Escherichia coli O8 (strain IAI1), this protein is Fatty acid oxidation complex subunit alpha.